Here is a 742-residue protein sequence, read N- to C-terminus: NAD(P)H-quinone oxidoreductase subunit 5, chloroplastic (742 aa).

The next 16 helical transmembrane spans lie at 9–29 (WIIP…LLLI), 40–60 (WAFP…NLAF), 89–109 (IDPL…MVLI), 125–145 (FAYM…SNLI), 147–167 (IYIF…FWFT), 185–205 (GDFG…SFEF), 228–248 (AFLL…HVWL), 256–276 (TPIS…FLVA), 288–308 (IMNI…TLAL), 325–345 (LGYI…FHLI), 352–372 (ALLF…VGYS), 394–414 (TTFL…CFWS), 423–443 (WLYS…TAFY), 544–564 (YPLL…IPLV), 599–619 (FFIN…LAFI), and 720–740 (ISFY…FLFL).

The protein belongs to the complex I subunit 5 family. In terms of assembly, NDH is composed of at least 16 different subunits, 5 of which are encoded in the nucleus.

It is found in the plastid. The protein localises to the chloroplast thylakoid membrane. It carries out the reaction a plastoquinone + NADH + (n+1) H(+)(in) = a plastoquinol + NAD(+) + n H(+)(out). The enzyme catalyses a plastoquinone + NADPH + (n+1) H(+)(in) = a plastoquinol + NADP(+) + n H(+)(out). In terms of biological role, NDH shuttles electrons from NAD(P)H:plastoquinone, via FMN and iron-sulfur (Fe-S) centers, to quinones in the photosynthetic chain and possibly in a chloroplast respiratory chain. The immediate electron acceptor for the enzyme in this species is believed to be plastoquinone. Couples the redox reaction to proton translocation, and thus conserves the redox energy in a proton gradient. This chain is NAD(P)H-quinone oxidoreductase subunit 5, chloroplastic (ndhF), found in Lemna minor (Common duckweed).